Here is a 337-residue protein sequence, read N- to C-terminus: Phenylalanine--tRNA ligase alpha subunit (337 aa).

E258 contributes to the Mg(2+) binding site.

Belongs to the class-II aminoacyl-tRNA synthetase family. Phe-tRNA synthetase alpha subunit type 1 subfamily. As to quaternary structure, tetramer of two alpha and two beta subunits. It depends on Mg(2+) as a cofactor.

Its subcellular location is the cytoplasm. The enzyme catalyses tRNA(Phe) + L-phenylalanine + ATP = L-phenylalanyl-tRNA(Phe) + AMP + diphosphate + H(+). This is Phenylalanine--tRNA ligase alpha subunit from Paraburkholderia phytofirmans (strain DSM 17436 / LMG 22146 / PsJN) (Burkholderia phytofirmans).